A 506-amino-acid chain; its full sequence is uncharacterized protein (506 aa).

282 to 289 (GIQGTGKS) provides a ligand contact to ATP.

It belongs to the AAA ATPase family. Highly divergent.

The protein resides in the plastid. Its subcellular location is the chloroplast. This is an uncharacterized protein from Guillardia theta (Cryptophyte).